The following is a 102-amino-acid chain: Thioredoxin (102 aa).

Residues 1–102 enclose the Thioredoxin domain; the sequence is MVKIISSENF…FLTNLINKHA (102 aa). A disulfide bridge links cysteine 28 with cysteine 31.

It belongs to the thioredoxin family.

In terms of biological role, participates in various redox reactions through the reversible oxidation of its active center dithiol to a disulfide and catalyzes dithiol-disulfide exchange reactions. This is Thioredoxin (trxA) from Chlamydia pneumoniae (Chlamydophila pneumoniae).